We begin with the raw amino-acid sequence, 296 residues long: NAD kinase (296 aa).

The active-site Proton acceptor is D72. NAD(+) is bound by residues D72–G73, N146–D147, R157, R174, D176, T187–S192, and Q247.

This sequence belongs to the NAD kinase family. The cofactor is a divalent metal cation.

It localises to the cytoplasm. It catalyses the reaction NAD(+) + ATP = ADP + NADP(+) + H(+). Functionally, involved in the regulation of the intracellular balance of NAD and NADP, and is a key enzyme in the biosynthesis of NADP. Catalyzes specifically the phosphorylation on 2'-hydroxyl of the adenosine moiety of NAD to yield NADP. In Hahella chejuensis (strain KCTC 2396), this protein is NAD kinase.